Reading from the N-terminus, the 366-residue chain is Glutamate 5-kinase (366 aa).

ATP is bound at residue Lys17. Ser57, Asp144, and Asn156 together coordinate substrate. Residues Ser176–Asp177 and Thr216–Lys222 contribute to the ATP site. In terms of domain architecture, PUA spans Ser278–Pro356.

The protein belongs to the glutamate 5-kinase family.

The protein resides in the cytoplasm. It carries out the reaction L-glutamate + ATP = L-glutamyl 5-phosphate + ADP. It participates in amino-acid biosynthesis; L-proline biosynthesis; L-glutamate 5-semialdehyde from L-glutamate: step 1/2. In terms of biological role, catalyzes the transfer of a phosphate group to glutamate to form L-glutamate 5-phosphate. The polypeptide is Glutamate 5-kinase (Mycolicibacterium vanbaalenii (strain DSM 7251 / JCM 13017 / BCRC 16820 / KCTC 9966 / NRRL B-24157 / PYR-1) (Mycobacterium vanbaalenii)).